Reading from the N-terminus, the 129-residue chain is MTKVIHTDNAPAAIGPYVQAVDLGNMLLTSGQIPVNPKTGEVPADIVAQARQSLENVKAIVEQAGLQVANIVKTTVFVKDLNDFAAVNAEYERFFKENNHPSFPARSCVEVARLPKDVGIEIEAIAVKA.

This sequence belongs to the RutC family.

In Pasteurella multocida (strain Pm70), this protein is RutC family protein PM1466.